The chain runs to 421 residues: UDP-N-acetylglucosamine 1-carboxyvinyltransferase 1 (421 aa).

A phosphoenolpyruvate-binding site is contributed by lysine 22–asparagine 23. Position 94 (arginine 94) interacts with UDP-N-acetyl-alpha-D-glucosamine. Residue cysteine 118 is the Proton donor of the active site. The residue at position 118 (cysteine 118) is a 2-(S-cysteinyl)pyruvic acid O-phosphothioketal. Residues arginine 123–leucine 127, aspartate 310, and valine 332 contribute to the UDP-N-acetyl-alpha-D-glucosamine site.

The protein belongs to the EPSP synthase family. MurA subfamily.

The protein localises to the cytoplasm. The catalysed reaction is phosphoenolpyruvate + UDP-N-acetyl-alpha-D-glucosamine = UDP-N-acetyl-3-O-(1-carboxyvinyl)-alpha-D-glucosamine + phosphate. It participates in cell wall biogenesis; peptidoglycan biosynthesis. In terms of biological role, cell wall formation. Adds enolpyruvyl to UDP-N-acetylglucosamine. This chain is UDP-N-acetylglucosamine 1-carboxyvinyltransferase 1, found in Clostridium perfringens (strain 13 / Type A).